Reading from the N-terminus, the 145-residue chain is ATP synthase epsilon chain (145 aa).

Belongs to the ATPase epsilon chain family. As to quaternary structure, F-type ATPases have 2 components, CF(1) - the catalytic core - and CF(0) - the membrane proton channel. CF(1) has five subunits: alpha(3), beta(3), gamma(1), delta(1), epsilon(1). CF(0) has three main subunits: a, b and c.

Its subcellular location is the cell inner membrane. Produces ATP from ADP in the presence of a proton gradient across the membrane. The sequence is that of ATP synthase epsilon chain from Francisella tularensis subsp. tularensis (strain FSC 198).